The chain runs to 472 residues: N-succinylglutamate 5-semialdehyde dehydrogenase 1 (472 aa).

Residue 209–214 participates in NAD(+) binding; it reads GGVQAG. Residues Glu-232 and Cys-266 contribute to the active site.

The protein belongs to the aldehyde dehydrogenase family. AstD subfamily.

The catalysed reaction is N-succinyl-L-glutamate 5-semialdehyde + NAD(+) + H2O = N-succinyl-L-glutamate + NADH + 2 H(+). Its pathway is amino-acid degradation; L-arginine degradation via AST pathway; L-glutamate and succinate from L-arginine: step 4/5. In terms of biological role, catalyzes the NAD-dependent reduction of succinylglutamate semialdehyde into succinylglutamate. The chain is N-succinylglutamate 5-semialdehyde dehydrogenase 1 from Caulobacter vibrioides (strain ATCC 19089 / CIP 103742 / CB 15) (Caulobacter crescentus).